The chain runs to 310 residues: Prephenate dehydratase (310 aa).

Residues Arg-3 to Leu-190 form the Prephenate dehydratase domain. Positions Ala-204–Pro-281 constitute an ACT domain.

In terms of assembly, homodimer.

It catalyses the reaction prephenate + H(+) = 3-phenylpyruvate + CO2 + H2O. Its pathway is amino-acid biosynthesis; L-phenylalanine biosynthesis; phenylpyruvate from prephenate: step 1/1. This Mycolicibacterium smegmatis (strain ATCC 700084 / mc(2)155) (Mycobacterium smegmatis) protein is Prephenate dehydratase (pheA).